The chain runs to 200 residues: Recombination protein RecR (200 aa).

Residues 59 to 74 (CEICGNIDTRSPCTVC) form a C4-type zinc finger. The 96-residue stretch at 82–177 (SIIVVVADVA…KVTRLAHGVP (96 aa)) folds into the Toprim domain.

This sequence belongs to the RecR family.

Functionally, may play a role in DNA repair. It seems to be involved in an RecBC-independent recombinational process of DNA repair. It may act with RecF and RecO. This chain is Recombination protein RecR, found in Nitrobacter hamburgensis (strain DSM 10229 / NCIMB 13809 / X14).